Here is a 419-residue protein sequence, read N- to C-terminus: Tol-Pal system protein TolB (419 aa).

The signal sequence occupies residues M1–A19.

This sequence belongs to the TolB family. The Tol-Pal system is composed of five core proteins: the inner membrane proteins TolA, TolQ and TolR, the periplasmic protein TolB and the outer membrane protein Pal. They form a network linking the inner and outer membranes and the peptidoglycan layer.

The protein localises to the periplasm. In terms of biological role, part of the Tol-Pal system, which plays a role in outer membrane invagination during cell division and is important for maintaining outer membrane integrity. The polypeptide is Tol-Pal system protein TolB (Legionella pneumophila (strain Corby)).